Reading from the N-terminus, the 316-residue chain is Transaldolase (316 aa).

K131 functions as the Schiff-base intermediate with substrate in the catalytic mechanism.

This sequence belongs to the transaldolase family. Type 1 subfamily. Homodimer.

Its subcellular location is the cytoplasm. The catalysed reaction is D-sedoheptulose 7-phosphate + D-glyceraldehyde 3-phosphate = D-erythrose 4-phosphate + beta-D-fructose 6-phosphate. The protein operates within carbohydrate degradation; pentose phosphate pathway; D-glyceraldehyde 3-phosphate and beta-D-fructose 6-phosphate from D-ribose 5-phosphate and D-xylulose 5-phosphate (non-oxidative stage): step 2/3. In terms of biological role, transaldolase is important for the balance of metabolites in the pentose-phosphate pathway. The polypeptide is Transaldolase (Sodalis glossinidius (strain morsitans)).